The following is a 597-amino-acid chain: Elongation factor 4 (597 aa).

A tr-type G domain is found at aspartate 2–lysine 184. GTP contacts are provided by residues aspartate 14–threonine 19 and asparagine 131–aspartate 134.

This sequence belongs to the TRAFAC class translation factor GTPase superfamily. Classic translation factor GTPase family. LepA subfamily.

The protein resides in the cell inner membrane. It carries out the reaction GTP + H2O = GDP + phosphate + H(+). In terms of biological role, required for accurate and efficient protein synthesis under certain stress conditions. May act as a fidelity factor of the translation reaction, by catalyzing a one-codon backward translocation of tRNAs on improperly translocated ribosomes. Back-translocation proceeds from a post-translocation (POST) complex to a pre-translocation (PRE) complex, thus giving elongation factor G a second chance to translocate the tRNAs correctly. Binds to ribosomes in a GTP-dependent manner. The polypeptide is Elongation factor 4 (Burkholderia vietnamiensis (strain G4 / LMG 22486) (Burkholderia cepacia (strain R1808))).